The following is a 418-amino-acid chain: L-methionine/branched-chain amino acid exporter YjeH (418 aa).

Over 1–15 (MSGLKQELGLAQGIG) the chain is Periplasmic. A helical transmembrane segment spans residues 16 to 36 (LLSTSLLGTGVFAVPALAALV). Residues 37 to 41 (AGNNS) are Cytoplasmic-facing. Residues 42 to 62 (LWAWPVLIILVFPIAIVFAIL) traverse the membrane as a helical segment. Residues 63–89 (GRHYPSAGGVAHFVGMAFGSRLERVTG) are Periplasmic-facing. Residues 90 to 110 (WLFLSVIPVGLPAALQIAAGF) form a helical membrane-spanning segment. The Cytoplasmic segment spans residues 111–113 (GQA). Residues 114–134 (MFGWHSWQLLLAELGTLALVW) form a helical membrane-spanning segment. Over 135–147 (YIGTRGASSSANL) the chain is Periplasmic. The chain crosses the membrane as a helical span at residues 148-168 (QTVIAGLIVALIVAIWWAGDI). At 169-182 (KPANIPFPAPGNIE) the chain is on the cytoplasmic side. The chain crosses the membrane as a helical span at residues 183–203 (LTGLFAALSVMFWCFVGLEAF). Residues 204-219 (AHLASEFKNPERDFPR) are Periplasmic-facing. Residues 220 to 240 (ALMIGLLLAGLVYWGCTVVVL) form a helical membrane-spanning segment. Over 241–257 (HFDAYGEKMAAAASLPK) the chain is Cytoplasmic. A helical transmembrane segment spans residues 258-278 (IVVQLFGVGALWIACVIGYLA). Topologically, residues 279 to 317 (CFASLNIYIQSFARLVWSQAQHNPDHYLARLSSRHIPNN) are periplasmic. The helical transmembrane segment at 318-338 (ALNAVLGCCVVSTLVIHALEI) threads the bilayer. The Cytoplasmic portion of the chain corresponds to 339-341 (NLD). Residues 342-362 (ALIIYANGIFIMIYLLCMLAG) form a helical membrane-spanning segment. The Periplasmic segment spans residues 363–378 (CKLLQGRYRLLAVVGG). The chain crosses the membrane as a helical span at residues 379–399 (LLCVLLLAMVGWKSLYALIML). At 400–418 (AGLWLLLPKRKTPENGITT) the chain is on the cytoplasmic side.

The protein belongs to the amino acid-polyamine-organocation (APC) superfamily. Amino acid efflux (AAE) (TC 2.A.3.13) family.

It localises to the cell inner membrane. The enzyme catalyses L-methionine(in) + H(+)(out) = L-methionine(out) + H(+)(in). The catalysed reaction is L-leucine(in) + H(+)(out) = L-leucine(out) + H(+)(in). It carries out the reaction L-isoleucine(in) + H(+)(out) = L-isoleucine(out) + H(+)(in). It catalyses the reaction L-valine(in) + H(+)(out) = L-valine(out) + H(+)(in). Its activity is regulated as follows. Efflux of L-methionine is inhibited by the proton ionophore carbonyl cyanide m-chlorophenylhydrazone (CCCP). In terms of biological role, catalyzes the efflux of L-methionine, L-leucine, L-isoleucine and L-valine. Activity is dependent on electrochemical potential. The chain is L-methionine/branched-chain amino acid exporter YjeH (yjeH) from Escherichia coli (strain K12).